The chain runs to 253 residues: Imidazole glycerol phosphate synthase subunit HisF (253 aa).

Active-site residues include Asp-11 and Asp-130.

The protein belongs to the HisA/HisF family. In terms of assembly, heterodimer of HisH and HisF.

It localises to the cytoplasm. It catalyses the reaction 5-[(5-phospho-1-deoxy-D-ribulos-1-ylimino)methylamino]-1-(5-phospho-beta-D-ribosyl)imidazole-4-carboxamide + L-glutamine = D-erythro-1-(imidazol-4-yl)glycerol 3-phosphate + 5-amino-1-(5-phospho-beta-D-ribosyl)imidazole-4-carboxamide + L-glutamate + H(+). It functions in the pathway amino-acid biosynthesis; L-histidine biosynthesis; L-histidine from 5-phospho-alpha-D-ribose 1-diphosphate: step 5/9. Its function is as follows. IGPS catalyzes the conversion of PRFAR and glutamine to IGP, AICAR and glutamate. The HisF subunit catalyzes the cyclization activity that produces IGP and AICAR from PRFAR using the ammonia provided by the HisH subunit. In Geotalea uraniireducens (strain Rf4) (Geobacter uraniireducens), this protein is Imidazole glycerol phosphate synthase subunit HisF.